The following is a 424-amino-acid chain: Enolase (424 aa).

Glutamine 165 is a binding site for (2R)-2-phosphoglycerate. Catalysis depends on glutamate 207, which acts as the Proton donor. Aspartate 244, glutamate 283, and aspartate 310 together coordinate Mg(2+). Positions 335, 364, 365, and 386 each coordinate (2R)-2-phosphoglycerate. Catalysis depends on lysine 335, which acts as the Proton acceptor.

Belongs to the enolase family. Mg(2+) is required as a cofactor.

Its subcellular location is the cytoplasm. It localises to the secreted. The protein localises to the cell surface. The catalysed reaction is (2R)-2-phosphoglycerate = phosphoenolpyruvate + H2O. Its pathway is carbohydrate degradation; glycolysis; pyruvate from D-glyceraldehyde 3-phosphate: step 4/5. Catalyzes the reversible conversion of 2-phosphoglycerate (2-PG) into phosphoenolpyruvate (PEP). It is essential for the degradation of carbohydrates via glycolysis. This is Enolase from Chlamydia felis (strain Fe/C-56) (Chlamydophila felis).